Reading from the N-terminus, the 191-residue chain is Large ribosomal subunit protein uL3 (191 aa).

The segment at 119–138 is disordered; sequence AAHGSRFHRRPGSIGNREWP.

It belongs to the universal ribosomal protein uL3 family. In terms of assembly, part of the 50S ribosomal subunit. Forms a cluster with proteins L14 and L19.

Functionally, one of the primary rRNA binding proteins, it binds directly near the 3'-end of the 23S rRNA, where it nucleates assembly of the 50S subunit. In Helicobacter pylori (strain ATCC 700392 / 26695) (Campylobacter pylori), this protein is Large ribosomal subunit protein uL3 (rplC).